The following is a 542-amino-acid chain: Thermosome subunit (542 aa).

It belongs to the TCP-1 chaperonin family. Forms an oligomeric complex of eight-membered rings.

Molecular chaperone; binds unfolded polypeptides in vitro, and has a weak ATPase activity. This Methanocaldococcus jannaschii (strain ATCC 43067 / DSM 2661 / JAL-1 / JCM 10045 / NBRC 100440) (Methanococcus jannaschii) protein is Thermosome subunit (ths).